Reading from the N-terminus, the 599-residue chain is ATP-binding cassette sub-family E member 1 (599 aa).

4Fe-4S ferredoxin-type domains lie at 7–37 (RIAIVNHDKCKPKKCRQECKKSCPVVRMGKL) and 46–75 (KIAWISETLCIGCGICIKKCPFGALSIVNL). A Glycyl lysine isopeptide (Lys-Gly) (interchain with G-Cter in ubiquitin) cross-link involves residue Lys20. ABC transporter domains lie at 79–315 (LEKE…FLDG) and 342–562 (VKKM…LSQL). Residues 110 to 117 (GTNGIGKS) and 379 to 386 (GENGTGKT) contribute to the ATP site. Ser417 is subject to Phosphoserine. Thr550 is modified (phosphothreonine).

The protein belongs to the ABC transporter superfamily. ABCE family. In terms of assembly, (Microbial infection) Interacts with Chandipura virus matrix protein. As to quaternary structure, interacts with PINK1. Interacts with CNOT4. Interacts with PELO. Probably heterodimerizes with RNASEL; this interaction inhibits RNASEL. (Microbial infection) Interacts with HIV-1 proteins Vif and Gag. In terms of assembly, (Microbial infection) Interacts with HIV-2 protein Gag. Ubiquitinated by CNOT4. Ubiquitination mediates the recruitment of autophagy receptors to the mitochondrial outer membrane and initiates mitophagy.

The protein localises to the cytoplasm. Its subcellular location is the mitochondrion. It catalyses the reaction GTP + H2O = GDP + phosphate + H(+). It carries out the reaction ATP + H2O = ADP + phosphate + H(+). The catalysed reaction is CTP + H2O = CDP + phosphate + H(+). The enzyme catalyses UTP + H2O = UDP + phosphate + H(+). Functionally, nucleoside-triphosphatase (NTPase) involved in ribosome recycling by mediating ribosome disassembly. Able to hydrolyze ATP, GTP, UTP and CTP. Splits ribosomes into free 60S subunits and tRNA- and mRNA-bound 40S subunits. Acts either after canonical termination facilitated by release factors (ETF1/eRF1) or after recognition of stalled and vacant ribosomes by mRNA surveillance factors (PELO/Pelota). Involved in the No-Go Decay (NGD) pathway: recruited to stalled ribosomes by the Pelota-HBS1L complex, and drives the disassembly of stalled ribosomes, followed by degradation of damaged mRNAs as part of the NGD pathway. Also plays a role in quality control of translation of mitochondrial outer membrane-localized mRNA. As part of the PINK1-regulated signaling, ubiquitinated by CNOT4 upon mitochondria damage; this modification generates polyubiquitin signals that recruit autophagy receptors to the mitochondrial outer membrane and initiate mitophagy. RNASEL-specific protein inhibitor which antagonizes the binding of 2-5A (5'-phosphorylated 2',5'-linked oligoadenylates) to RNASEL. Negative regulator of the anti-viral effect of the interferon-regulated 2-5A/RNASEL pathway. (Microbial infection) May act as a chaperone for post-translational events during HIV-1 capsid assembly. Its function is as follows. (Microbial infection) Plays a role in the down-regulation of the 2-5A/RNASEL pathway during encephalomyocarditis virus (EMCV) and HIV-1 infections. This is ATP-binding cassette sub-family E member 1 (ABCE1) from Homo sapiens (Human).